Here is a 246-residue protein sequence, read N- to C-terminus: 3-deoxy-manno-octulosonate cytidylyltransferase (246 aa).

Belongs to the KdsB family.

The protein localises to the cytoplasm. The enzyme catalyses 3-deoxy-alpha-D-manno-oct-2-ulosonate + CTP = CMP-3-deoxy-beta-D-manno-octulosonate + diphosphate. The protein operates within nucleotide-sugar biosynthesis; CMP-3-deoxy-D-manno-octulosonate biosynthesis; CMP-3-deoxy-D-manno-octulosonate from 3-deoxy-D-manno-octulosonate and CTP: step 1/1. It functions in the pathway bacterial outer membrane biogenesis; lipopolysaccharide biosynthesis. In terms of biological role, activates KDO (a required 8-carbon sugar) for incorporation into bacterial lipopolysaccharide in Gram-negative bacteria. This is 3-deoxy-manno-octulosonate cytidylyltransferase from Rickettsia conorii (strain ATCC VR-613 / Malish 7).